Reading from the N-terminus, the 161-residue chain is ATP synthase subunit b 1 (161 aa).

Residues 6–26 (ETWVAIAFVILMVVFGYLGVF) form a helical membrane-spanning segment.

This sequence belongs to the ATPase B chain family. F-type ATPases have 2 components, F(1) - the catalytic core - and F(0) - the membrane proton channel. F(1) has five subunits: alpha(3), beta(3), gamma(1), delta(1), epsilon(1). F(0) has three main subunits: a(1), b(2) and c(10-14). The alpha and beta chains form an alternating ring which encloses part of the gamma chain. F(1) is attached to F(0) by a central stalk formed by the gamma and epsilon chains, while a peripheral stalk is formed by the delta and b chains.

The protein localises to the cell inner membrane. Its function is as follows. F(1)F(0) ATP synthase produces ATP from ADP in the presence of a proton or sodium gradient. F-type ATPases consist of two structural domains, F(1) containing the extramembraneous catalytic core and F(0) containing the membrane proton channel, linked together by a central stalk and a peripheral stalk. During catalysis, ATP synthesis in the catalytic domain of F(1) is coupled via a rotary mechanism of the central stalk subunits to proton translocation. In terms of biological role, component of the F(0) channel, it forms part of the peripheral stalk, linking F(1) to F(0). The chain is ATP synthase subunit b 1 from Bradyrhizobium diazoefficiens (strain JCM 10833 / BCRC 13528 / IAM 13628 / NBRC 14792 / USDA 110).